Here is an 87-residue protein sequence, read N- to C-terminus: Large ribosomal subunit protein bL27 (87 aa).

The interval 1 to 21 (MAHKKGQGSTQNNRDSAGRRL) is disordered.

It belongs to the bacterial ribosomal protein bL27 family.

The sequence is that of Large ribosomal subunit protein bL27 from Nautilia profundicola (strain ATCC BAA-1463 / DSM 18972 / AmH).